Consider the following 438-residue polypeptide: Glutamate-1-semialdehyde 2,1-aminomutase (438 aa).

At lysine 274 the chain carries N6-(pyridoxal phosphate)lysine.

The protein belongs to the class-III pyridoxal-phosphate-dependent aminotransferase family. HemL subfamily. In terms of assembly, homodimer. The cofactor is pyridoxal 5'-phosphate.

It is found in the cytoplasm. It carries out the reaction (S)-4-amino-5-oxopentanoate = 5-aminolevulinate. It functions in the pathway porphyrin-containing compound metabolism; protoporphyrin-IX biosynthesis; 5-aminolevulinate from L-glutamyl-tRNA(Glu): step 2/2. The polypeptide is Glutamate-1-semialdehyde 2,1-aminomutase (Salinibacter ruber (strain DSM 13855 / M31)).